The primary structure comprises 262 residues: uncharacterized protein (262 aa).

Histidine 7, histidine 9, glutamate 96, histidine 132, histidine 156, and aspartate 211 together coordinate a divalent metal cation.

The protein belongs to the metallo-dependent hydrolases superfamily. TatD-type hydrolase family. It depends on a divalent metal cation as a cofactor.

This is an uncharacterized protein from Mycoplasma genitalium (strain ATCC 33530 / DSM 19775 / NCTC 10195 / G37) (Mycoplasmoides genitalium).